The primary structure comprises 514 residues: L-carnitine/gamma-butyrobetaine antiporter (514 aa).

Residues 1–11 are Cytoplasmic-facing; that stretch reads MSKDNKKAGIE. The chain crosses the membrane as a helical span at residues 12 to 30; sequence PKVFFPPLIIVGILCWLTV. Over 31–42 the chain is Periplasmic; that stretch reads RDLDASNEVINA. Residues 43-68 traverse the membrane as a helical segment; it reads VFSYVTNVWGWAFEWYMVIMFGGWFW. Residues 69–91 are Cytoplasmic-facing; the sequence is LVFGRYAKKRLGDEKPEFSTASW. The helical transmembrane segment at 92–112 threads the bilayer; the sequence is IFMMFASCTSAAVLFWGSIEI. At 113–131 the chain is on the periplasmic side; sequence YYYISSPPFGMEGYSAPAK. Residues 132–154 form a helical membrane-spanning segment; sequence EIGLAYSLFHWGPLPWATYSFLS. The Cytoplasmic portion of the chain corresponds to 155 to 185; the sequence is VAFAYFFFVRKMEVIRPSSTLTPLVGEKHVN. A helical membrane pass occupies residues 186–216; it reads GLFGTVVDNFYLVALILAMGTSLGLATPLVT. Topologically, residues 217 to 230 are periplasmic; it reads ECIQYLFGIPHTLQ. The helical transmembrane segment at 231–249 threads the bilayer; it reads LDAIIISCWILLNAICVAF. Residues 250–251 are Cytoplasmic-facing; the sequence is GL. Residues 252–277 form a helical membrane-spanning segment; that stretch reads QKGVKIASDVRTYLSFLMLGWVFIVG. At 278–311 the chain is on the periplasmic side; the sequence is GASFIVNYFTDSVGTLLMYMPRMLFYTDPIGKGG. A helical transmembrane segment spans residues 312–335; sequence FPQAWTVFYWAWWVIYAIQMSIFL. At 336 to 347 the chain is on the cytoplasmic side; the sequence is ARISKGRTVREL. Residues 348–369 traverse the membrane as a helical segment; sequence CLGMVSGLTAGTWLIWTILGGN. The Periplasmic segment spans residues 370–404; the sequence is TLQLIDQNILNIPQLIDQYGVPRAIIETWAALPLS. A helical transmembrane segment spans residues 405-434; the sequence is TATMWGFFILCFIATVTLINACSYTLAMST. The Cytoplasmic portion of the chain corresponds to 435-445; the sequence is CRSMKEGAEPP. Residues 446–464 traverse the membrane as a helical segment; that stretch reads LLVRIGWSVLVGIIGIILL. The Periplasmic segment spans residues 465 to 468; the sequence is ALGG. A helical membrane pass occupies residues 469–492; the sequence is LKPIQTAIIAGGCPLFFVNIMVTL. At 493–514 the chain is on the cytoplasmic side; it reads SFIKDAKVHWKDCSPYTQKMTH.

This sequence belongs to the BCCT transporter (TC 2.A.15) family. CaiT subfamily. In terms of assembly, homotrimer.

Its subcellular location is the cell inner membrane. It catalyses the reaction 4-(trimethylamino)butanoate(in) + (R)-carnitine(out) = 4-(trimethylamino)butanoate(out) + (R)-carnitine(in). It participates in amine and polyamine metabolism; carnitine metabolism. Its function is as follows. Catalyzes the exchange of L-carnitine for gamma-butyrobetaine. This chain is L-carnitine/gamma-butyrobetaine antiporter, found in Proteus mirabilis (strain HI4320).